The sequence spans 156 residues: Small ribosomal subunit protein uS7c (156 aa).

This sequence belongs to the universal ribosomal protein uS7 family. As to quaternary structure, part of the 30S ribosomal subunit.

The protein localises to the plastid. It is found in the chloroplast. Functionally, one of the primary rRNA binding proteins, it binds directly to 16S rRNA where it nucleates assembly of the head domain of the 30S subunit. In Nephroselmis olivacea (Green alga), this protein is Small ribosomal subunit protein uS7c (rps7).